Consider the following 883-residue polypeptide: Phosphoenolpyruvate carboxylase (883 aa).

Catalysis depends on residues His138 and Lys546.

This sequence belongs to the PEPCase type 1 family. It depends on Mg(2+) as a cofactor.

The catalysed reaction is oxaloacetate + phosphate = phosphoenolpyruvate + hydrogencarbonate. Functionally, forms oxaloacetate, a four-carbon dicarboxylic acid source for the tricarboxylic acid cycle. In Klebsiella pneumoniae (strain 342), this protein is Phosphoenolpyruvate carboxylase.